The following is a 178-amino-acid chain: Large ribosomal subunit protein uL6 (178 aa).

This sequence belongs to the universal ribosomal protein uL6 family. As to quaternary structure, part of the 50S ribosomal subunit.

This protein binds to the 23S rRNA, and is important in its secondary structure. It is located near the subunit interface in the base of the L7/L12 stalk, and near the tRNA binding site of the peptidyltransferase center. The sequence is that of Large ribosomal subunit protein uL6 from Francisella tularensis subsp. tularensis (strain FSC 198).